A 179-amino-acid polypeptide reads, in one-letter code: Large ribosomal subunit protein uL10 (179 aa).

Belongs to the universal ribosomal protein uL10 family. Part of the ribosomal stalk of the 50S ribosomal subunit. The N-terminus interacts with L11 and the large rRNA to form the base of the stalk. The C-terminus forms an elongated spine to which L12 dimers bind in a sequential fashion forming a multimeric L10(L12)X complex.

Forms part of the ribosomal stalk, playing a central role in the interaction of the ribosome with GTP-bound translation factors. The sequence is that of Large ribosomal subunit protein uL10 from Mycolicibacterium gilvum (strain PYR-GCK) (Mycobacterium gilvum (strain PYR-GCK)).